Here is a 510-residue protein sequence, read N- to C-terminus: RNA-splicing ligase RtcB homolog (510 aa).

Residues Asp-124, Cys-127, His-232, His-264, and His-358 each coordinate Mn(2+). Position 231–235 (231–235) interacts with GMP; that stretch reads NHYAE. Residues 358 to 359, 407 to 410, Ser-414, 433 to 436, and Lys-509 each bind GMP; these read HN, GGTM, and HGAG. Catalysis depends on His-433, which acts as the GMP-histidine intermediate.

This sequence belongs to the RtcB family. Catalytic component of the tRNA-splicing ligase complex. Requires Mn(2+) as cofactor.

The catalysed reaction is a 3'-end 3'-phospho-ribonucleotide-RNA + a 5'-end dephospho-ribonucleoside-RNA + GTP = a ribonucleotidyl-ribonucleotide-RNA + GMP + diphosphate. It carries out the reaction a 3'-end 2',3'-cyclophospho-ribonucleotide-RNA + a 5'-end dephospho-ribonucleoside-RNA + GTP + H2O = a ribonucleotidyl-ribonucleotide-RNA + GMP + diphosphate + H(+). Catalytic subunit of the tRNA-splicing ligase complex that acts by directly joining spliced tRNA halves to mature-sized tRNAs by incorporating the precursor-derived splice junction phosphate into the mature tRNA as a canonical 3',5'-phosphodiester. May act as an RNA ligase with broad substrate specificity, and may function toward other RNAs. The protein is RNA-splicing ligase RtcB homolog of Trichoplax adhaerens (Trichoplax reptans).